Here is a 988-residue protein sequence, read N- to C-terminus: DNA-binding protein SMUBP-2 (988 aa).

Ala-2 carries the N-acetylalanine modification. ATP contacts are provided by residues 213-220, Gln-402, Tyr-441, and Glu-570; that span reads GPPGTGKT. The tract at residues 637–783 is SS DNA-binding; that stretch reads TAFEYLDDIV…KARHITVSRR (147 aa). Disordered stretches follow at residues 651–722, 765–820, and 835–872; these read THEG…GGTD, LKHD…PHGS, and RQQG…ALPS. Over residues 702–718 the composition is skewed to polar residues; that stretch reads SQVQPQHSSKANGSDRT. The 64-residue stretch at 721–784 folds into the R3H domain; it reads TDRTEHFRAM…ARHITVSRRS (64 aa). Positions 765–775 are enriched in basic and acidic residues; it reads LKHDSTGEGKA. A phosphoserine mark is found at Ser-797 and Ser-800. The span at 802-817 shows a compositional bias: low complexity; that stretch reads AQAEPEPQVEQPVGQP. Polar residues predominate over residues 835-844; sequence RQQGCQAQSQ. The short motif at 857–861 is the Nuclear localization signal element; sequence KKKKK. The AN1-type zinc-finger motif lies at 884–933; the sequence is VKADNTCSFTKCSASTTTLGQFCMHCSRRYCLSHHLPEIHGCGEKARAHA. Positions 890, 895, 906, 909, 914, 917, 923, and 925 each coordinate Zn(2+). The disordered stretch occupies residues 943–988; it reads LYAGSGTKDRALDPAKRAQLQRKLDKKLGELSSQRTSKKKEKERGT. The segment covering 949 to 971 has biased composition (basic and acidic residues); the sequence is TKDRALDPAKRAQLQRKLDKKLG. Residues 957 to 986 adopt a coiled-coil conformation; the sequence is AKRAQLQRKLDKKLGELSSQRTSKKKEKER.

It belongs to the DNA2/NAM7 helicase family. In terms of assembly, homooligomer. Interacts with RUVBL1. Interacts with RUVBL2. Interacts with GTF3C1. Interacts with ABT1. Interacts with ribosomes. As to expression, expressed in liver, skin, muscle, heart, brain, spleen and kidney.

It is found in the nucleus. It localises to the cytoplasm. The protein localises to the cell projection. The protein resides in the axon. It carries out the reaction ATP + H2O = ADP + phosphate + H(+). Functionally, 5' to 3' helicase that unwinds RNA and DNA duplexes in an ATP-dependent reaction. Specific to 5'-phosphorylated single-stranded guanine-rich sequences. May play a role in RNA metabolism, ribosome biogenesis or initiation of translation. May play a role in regulation of transcription. Interacts with tRNA-Tyr. The protein is DNA-binding protein SMUBP-2 (Ighmbp2) of Rattus norvegicus (Rat).